The following is a 624-amino-acid chain: DNA-directed RNA polymerase III subunit rpc-3 (624 aa).

2 disordered regions span residues 229-260 (KRKL…EEDL) and 373-418 (LAPK…ARMS). The span at 385–403 (DDSDDDEEDGDYSDSDEEM) shows a compositional bias: acidic residues. The interval 551-572 (CYATMVHCLQVLEVRRQKDKDV) is leucine-zipper.

Belongs to the RNA polymerase beta chain family. In terms of assembly, component of the RNA polymerase III (Pol III) complex consisting of 17 subunits.

The protein localises to the nucleus. Functionally, DNA-dependent RNA polymerase catalyzes the transcription of DNA into RNA using the four ribonucleoside triphosphates as substrates. Specific core component of RNA polymerase III which synthesizes small RNAs, such as 5S rRNA and tRNAs. The polypeptide is DNA-directed RNA polymerase III subunit rpc-3 (rpc-82) (Neurospora crassa (strain ATCC 24698 / 74-OR23-1A / CBS 708.71 / DSM 1257 / FGSC 987)).